The primary structure comprises 858 residues: Adenylate cyclase, germination specific (858 aa).

Residues 1-18 (MKKTFVKILSKSYVEGYP) are Cytoplasmic-facing. The helical; Signal-anchor for type II membrane protein transmembrane segment at 19 to 41 (VGFFIGLIILAIFGSMVCIFSFM) threads the bilayer. Over 42–858 (HYSEEENSNI…DENVESKKNK (817 aa)) the chain is Extracellular. The 232-residue stretch at 86–317 (VNPNFDRNDF…DCVLKLWIFT (232 aa)) folds into the CHASE domain. Residues 396 to 526 (CVFFLDIAGF…DTVNVASRME (131 aa)) form the Guanylate cyclase domain. Aspartate 401, isoleucine 402, and aspartate 445 together coordinate Mg(2+). Disordered regions lie at residues 650–691 (YYYH…YHDT), 767–803 (SDNV…STNE), and 827–858 (ENCD…KKNK). Composition is skewed to low complexity over residues 767-778 (SDNVNNYENNNN), 788-797 (GDNNNINDNN), and 834-849 (DNNN…NNND).

The protein belongs to the adenylyl cyclase class-4/guanylyl cyclase family.

It is found in the membrane. The enzyme catalyses ATP = 3',5'-cyclic AMP + diphosphate. Insensitive to guanine nucleotides. In terms of biological role, has a large extracellular domain which may be involved in the recognition of an extracellular signal present during germination, leading to activation or inhibition of cAMP synthesis by the cytoplasmic domain. The chain is Adenylate cyclase, germination specific (acgA) from Dictyostelium discoideum (Social amoeba).